A 354-amino-acid polypeptide reads, in one-letter code: MLCGGSRASVHLWDHRHPPRLGAKVLRKSSFMLRPCSAISQQRIKSSFRSHCKTPRKIPAPLDCFSQGDDHPELSAEGLSPVAGGIVALGKFDALHIGHRELAIQAARIGTPYLLSFVGLAEVLGWKPRAPIVAKCDRKRVLSSWASYCGNIAPVEFEIEFASVRHLNPQQFVEKLSRELRVCGVVAGENYRFGYRASGDASELVRLCKDFGISAYIINSVMDKNQVSVNTEEEDSKSKERGQVSSTRVRHALAAGDVRYVTELLGRPHRVISRTRTQDLTSKRGRISLQTSSLLNLPPGNGVYKACSLIVGDKHPISCKVIVDTSNLYIETEEERFHNSDESQEFQLLGIEFG.

A chloroplast-targeting transit peptide spans 1-75 (MLCGGSRASV…SQGDDHPELS (75 aa)). Residues 228–248 (SVNTEEEDSKSKERGQVSSTR) form a disordered region.

Mg(2+) is required as a cofactor.

The protein localises to the plastid. It localises to the chloroplast. The enzyme catalyses FMN + ATP + H(+) = FAD + diphosphate. Its pathway is cofactor biosynthesis; FAD biosynthesis; FAD from FMN: step 1/1. Catalyzes the adenylation of flavin mononucleotide (FMN) to form flavin adenine dinucleotide (FAD) coenzyme. This Arabidopsis thaliana (Mouse-ear cress) protein is FAD synthetase 1, chloroplastic.